An 85-amino-acid polypeptide reads, in one-letter code: Actobindin homolog (85 aa).

One can recognise a WH2 domain in the interval 35-52; that stretch reads DRNELLSGIKEGKELKKA.

In terms of biological role, is able to bind two actin monomers at high concentrations of G-actin. This chain is Actobindin homolog, found in Entamoeba histolytica.